Consider the following 252-residue polypeptide: 3-dehydroquinate dehydratase (252 aa).

Residues 46-48 (EWR) and R82 contribute to the 3-dehydroquinate site. H143 functions as the Proton donor/acceptor in the catalytic mechanism. K170 (schiff-base intermediate with substrate) is an active-site residue. R212, S231, and Q235 together coordinate 3-dehydroquinate.

It belongs to the type-I 3-dehydroquinase family. Homodimer.

It carries out the reaction 3-dehydroquinate = 3-dehydroshikimate + H2O. The protein operates within metabolic intermediate biosynthesis; chorismate biosynthesis; chorismate from D-erythrose 4-phosphate and phosphoenolpyruvate: step 3/7. Its function is as follows. Involved in the third step of the chorismate pathway, which leads to the biosynthesis of aromatic amino acids. Catalyzes the cis-dehydration of 3-dehydroquinate (DHQ) and introduces the first double bond of the aromatic ring to yield 3-dehydroshikimate. In Listeria welshimeri serovar 6b (strain ATCC 35897 / DSM 20650 / CCUG 15529 / CIP 8149 / NCTC 11857 / SLCC 5334 / V8), this protein is 3-dehydroquinate dehydratase.